The primary structure comprises 235 residues: Proteasome subunit alpha type-2-B (235 aa).

Residue K64 forms a Glycyl lysine isopeptide (Lys-Gly) (interchain with G-Cter in ubiquitin) linkage.

It belongs to the peptidase T1A family. In terms of assembly, component of the 20S core complex of the 26S proteasome. The 26S proteasome is composed of a core protease (CP), known as the 20S proteasome, capped at one or both ends by the 19S regulatory particle (RP/PA700). The 20S proteasome core is composed of 28 subunits that are arranged in four stacked rings, resulting in a barrel-shaped structure. The two end rings are each formed by seven alpha subunits, and the two central rings are each formed by seven beta subunits. The catalytic chamber with the active sites is on the inside of the barrel.

It is found in the cytoplasm. The protein resides in the nucleus. In terms of biological role, the proteasome is a multicatalytic proteinase complex which is characterized by its ability to cleave peptides with Arg, Phe, Tyr, Leu, and Glu adjacent to the leaving group at neutral or slightly basic pH. The proteasome has an ATP-dependent proteolytic activity. The chain is Proteasome subunit alpha type-2-B (PAB2) from Arabidopsis thaliana (Mouse-ear cress).